The sequence spans 553 residues: Arginine--tRNA ligase (553 aa).

A 'HIGH' region motif is present at residues 130 to 140 (ANPTGDLHIGH).

It belongs to the class-I aminoacyl-tRNA synthetase family. Monomer.

The protein resides in the cytoplasm. The enzyme catalyses tRNA(Arg) + L-arginine + ATP = L-arginyl-tRNA(Arg) + AMP + diphosphate. The polypeptide is Arginine--tRNA ligase (Staphylococcus aureus (strain bovine RF122 / ET3-1)).